The following is a 600-amino-acid chain: NADH-quinone oxidoreductase subunit C/D (600 aa).

Positions 1–190 (MVNNMTDLTA…SPFELTKAKQ (190 aa)) are NADH dehydrogenase I subunit C. An NADH dehydrogenase I subunit D region spans residues 214 to 600 (DFMFLNLGPN…IDFVMSDVDR (387 aa)).

The protein in the N-terminal section; belongs to the complex I 30 kDa subunit family. It in the C-terminal section; belongs to the complex I 49 kDa subunit family. In terms of assembly, NDH-1 is composed of 13 different subunits. Subunits NuoB, CD, E, F, and G constitute the peripheral sector of the complex.

It localises to the cell inner membrane. It carries out the reaction a quinone + NADH + 5 H(+)(in) = a quinol + NAD(+) + 4 H(+)(out). In terms of biological role, NDH-1 shuttles electrons from NADH, via FMN and iron-sulfur (Fe-S) centers, to quinones in the respiratory chain. The immediate electron acceptor for the enzyme in this species is believed to be ubiquinone. Couples the redox reaction to proton translocation (for every two electrons transferred, four hydrogen ions are translocated across the cytoplasmic membrane), and thus conserves the redox energy in a proton gradient. This is NADH-quinone oxidoreductase subunit C/D from Escherichia coli (strain ATCC 8739 / DSM 1576 / NBRC 3972 / NCIMB 8545 / WDCM 00012 / Crooks).